The following is a 125-amino-acid chain: Actin, alpha skeletal muscle (125 aa).

It belongs to the actin family. Polymerization of globular actin (G-actin) leads to a structural filament (F-actin) in the form of a two-stranded helix. Each actin can bind to 4 others. In terms of processing, methylated at His-75 by SETD3.

The protein localises to the cytoplasm. The protein resides in the cytoskeleton. In terms of biological role, actins are highly conserved proteins that are involved in various types of cell motility and are ubiquitously expressed in all eukaryotic cells. This chain is Actin, alpha skeletal muscle, found in Pleurodeles waltl (Iberian ribbed newt).